We begin with the raw amino-acid sequence, 126 residues long: Glycine cleavage system H protein (126 aa).

Positions 22–104 constitute a Lipoyl-binding domain; sequence KAYIGITSFA…YEQAWMIVVE (83 aa). The residue at position 63 (Lys63) is an N6-lipoyllysine.

It belongs to the GcvH family. In terms of assembly, the glycine cleavage system is composed of four proteins: P, T, L and H. The cofactor is (R)-lipoate.

Its function is as follows. The glycine cleavage system catalyzes the degradation of glycine. The H protein shuttles the methylamine group of glycine from the P protein to the T protein. Functionally, is also involved in protein lipoylation via its role as an octanoyl/lipoyl carrier protein intermediate. The polypeptide is Glycine cleavage system H protein (Brevibacillus brevis (strain 47 / JCM 6285 / NBRC 100599)).